Consider the following 185-residue polypeptide: Ribosome-recycling factor (185 aa).

The protein belongs to the RRF family.

Its subcellular location is the cytoplasm. In terms of biological role, responsible for the release of ribosomes from messenger RNA at the termination of protein biosynthesis. May increase the efficiency of translation by recycling ribosomes from one round of translation to another. This is Ribosome-recycling factor from Mycolicibacterium vanbaalenii (strain DSM 7251 / JCM 13017 / BCRC 16820 / KCTC 9966 / NRRL B-24157 / PYR-1) (Mycobacterium vanbaalenii).